The sequence spans 157 residues: Phosphopantetheine adenylyltransferase (157 aa).

Ser8 contacts substrate. Residues 8–9 (SF) and His16 each bind ATP. Positions 40, 72, and 86 each coordinate substrate. ATP-binding positions include 87–89 (GLR), Glu97, and 122–128 (FSFLSSS).

Belongs to the bacterial CoaD family. In terms of assembly, homohexamer. Mg(2+) is required as a cofactor.

It localises to the cytoplasm. It carries out the reaction (R)-4'-phosphopantetheine + ATP + H(+) = 3'-dephospho-CoA + diphosphate. Its pathway is cofactor biosynthesis; coenzyme A biosynthesis; CoA from (R)-pantothenate: step 4/5. Functionally, reversibly transfers an adenylyl group from ATP to 4'-phosphopantetheine, yielding dephospho-CoA (dPCoA) and pyrophosphate. The sequence is that of Phosphopantetheine adenylyltransferase from Prochlorococcus marinus (strain MIT 9211).